The sequence spans 62 residues: Photosystem II reaction center protein Z (62 aa).

2 consecutive transmembrane segments (helical) span residues 8–28 (TMFALIAISFLLIIGVPITFA) and 41–61 (FSGVSLWIVLVFAVGILNSFI).

Belongs to the PsbZ family. In terms of assembly, PSII is composed of 1 copy each of membrane proteins PsbA, PsbB, PsbC, PsbD, PsbE, PsbF, PsbH, PsbI, PsbJ, PsbK, PsbL, PsbM, PsbT, PsbY, PsbZ, Psb30/Ycf12, at least 3 peripheral proteins of the oxygen-evolving complex and a large number of cofactors. It forms dimeric complexes.

It localises to the plastid. The protein resides in the chloroplast thylakoid membrane. In terms of biological role, may control the interaction of photosystem II (PSII) cores with the light-harvesting antenna, regulates electron flow through the 2 photosystem reaction centers. PSII is a light-driven water plastoquinone oxidoreductase, using light energy to abstract electrons from H(2)O, generating a proton gradient subsequently used for ATP formation. This Welwitschia mirabilis (Tree tumbo) protein is Photosystem II reaction center protein Z.